Here is a 256-residue protein sequence, read N- to C-terminus: UPF0259 membrane protein plu2479 (256 aa).

5 helical membrane-spanning segments follow: residues 23–43 (TLTL…LFIP), 89–109 (IFSS…LVAA), 132–152 (LFLL…LMLV), 192–212 (LLVP…FIID), and 221–241 (MAGI…LIYL).

This sequence belongs to the UPF0259 family.

The protein localises to the cell inner membrane. This is UPF0259 membrane protein plu2479 from Photorhabdus laumondii subsp. laumondii (strain DSM 15139 / CIP 105565 / TT01) (Photorhabdus luminescens subsp. laumondii).